Reading from the N-terminus, the 92-residue chain is UPF0250 protein Pmen_3793 (92 aa).

The protein belongs to the UPF0250 family.

The protein is UPF0250 protein Pmen_3793 of Ectopseudomonas mendocina (strain ymp) (Pseudomonas mendocina).